We begin with the raw amino-acid sequence, 105 residues long: Immunoglobulin lambda-like polypeptide 1 (105 aa).

The interval 1–105 (QPKSDPLVTL…EKSVSPAECS (105 aa)) is c region. The region spanning 6–100 (PLVTLFLPSL…EGNTVEKSVS (95 aa)) is the Ig-like C1-type domain. Cys27 and Cys86 form a disulfide bridge.

In terms of assembly, associates non-covalently with VPREB1A. Interacts with SYNV1/HRD1 (via N-terminus); this interaction leads to increased IGLL1 ubiquitination and degradation in pre-B cells, possibly through a lysosomal, not proteasomal, pathway.

Its subcellular location is the endoplasmic reticulum. The protein localises to the secreted. Critical for B-cell development. This Mus spretus (Western Mediterranean mouse) protein is Immunoglobulin lambda-like polypeptide 1 (Igll1).